A 468-amino-acid chain; its full sequence is ERO1-like protein alpha (468 aa).

Residues 1 to 23 (MGHRWGFLIVFLGAVGLLGSGYG) form the signal peptide. 8 disulfides stabilise this stretch: Cys35/Cys48, Cys37/Cys46, Cys85/Cys391, Cys94/Cys99, Cys94/Cys131, Cys99/Cys104, Cys208/Cys241, and Cys394/Cys397. Phosphoserine is present on residues Ser106, Ser143, and Ser145. Residues Arg187, Thr189, and Trp200 each contribute to the FAD site. Residues Ser252 and His255 each contribute to the FAD site. Asn280 is a glycosylation site (N-linked (GlcNAc...) asparagine). 2 residues coordinate FAD: Arg287 and Arg300. Asn384 carries N-linked (GlcNAc...) asparagine glycosylation.

It belongs to the EROs family. As to quaternary structure, predominantly monomer. May function both as a monomer and a homodimer. Interacts with PDILT. Interacts with ERP44; the interaction results in retention of ERO1A in the endoplasmic reticulum. FAD is required as a cofactor. The Cys-94/Cys-99 and Cys-394/Cys-397 disulfide bonds constitute the redox-active center. The Cys-94/Cys-99 disulfide bond may accept electron from P4HB and funnel them to the active site disulfide Cys-394/Cys-397. The regulatory Cys-99/Cys-104 disulfide bond stabilizes the other regulatory bond Cys-94/Cys-131. In terms of processing, phosphorylated on Ser-145 by FAM20C in the Golgi which increases its enzymatic activity. Phosphorylation is induced by lactation. It is also induced by hypoxia and reductive stress.

It is found in the endoplasmic reticulum membrane. It localises to the golgi apparatus lumen. Its subcellular location is the secreted. The protein resides in the cell projection. The protein localises to the dendrite. With respect to regulation, enzyme activity is tightly regulated to prevent the accumulation of reactive oxygen species in the endoplasmic reticulum. Reversibly down-regulated by the formation of disulfide bonds between the active site Cys-94 and Cys-131, and between Cys-99 and Cys-104. Glutathione may be required to regulate its activity in the endoplasmic reticulum. In terms of biological role, oxidoreductase involved in disulfide bond formation in the endoplasmic reticulum. Efficiently reoxidizes P4HB/PDI, the enzyme catalyzing protein disulfide formation, in order to allow P4HB to sustain additional rounds of disulfide formation. Following P4HB reoxidation, passes its electrons to molecular oxygen via FAD, leading to the production of reactive oxygen species (ROS) in the cell. Required for the proper folding of immunoglobulins. Plays an important role in ER stress-induced, CHOP-dependent apoptosis by activating the inositol 1,4,5-trisphosphate receptor IP3R1. This chain is ERO1-like protein alpha, found in Sus scrofa (Pig).